We begin with the raw amino-acid sequence, 333 residues long: D-lactate dehydrogenase (333 aa).

Residues 156 to 157 (HI), aspartate 176, 207 to 208 (VP), asparagine 213, 234 to 236 (VSR), and aspartate 260 contribute to the NAD(+) site. Residue arginine 236 is part of the active site. The active site involves glutamate 265. Residue histidine 297 is the Proton donor of the active site.

It belongs to the D-isomer specific 2-hydroxyacid dehydrogenase family. Homodimer.

The enzyme catalyses (R)-lactate + NAD(+) = pyruvate + NADH + H(+). In Lactobacillus delbrueckii subsp. bulgaricus (strain ATCC 11842 / DSM 20081 / BCRC 10696 / JCM 1002 / NBRC 13953 / NCIMB 11778 / NCTC 12712 / WDCM 00102 / Lb 14), this protein is D-lactate dehydrogenase (ldhA).